The chain runs to 281 residues: Phosphate import ATP-binding protein PstB (281 aa).

Residues 33–276 (FKIENLSLWY…PQLKRTRDYI (244 aa)) enclose the ABC transporter domain. 67–74 (GPSGCGKS) is a binding site for ATP.

Belongs to the ABC transporter superfamily. Phosphate importer (TC 3.A.1.7) family. As to quaternary structure, the complex is composed of two ATP-binding proteins (PstB), two transmembrane proteins (PstC and PstA) and a solute-binding protein (PstS).

Its subcellular location is the cell membrane. The catalysed reaction is phosphate(out) + ATP + H2O = ADP + 2 phosphate(in) + H(+). Part of the ABC transporter complex PstSACB involved in phosphate import. Responsible for energy coupling to the transport system. This is Phosphate import ATP-binding protein PstB from Mycoplasma mobile (strain ATCC 43663 / 163K / NCTC 11711) (Mesomycoplasma mobile).